We begin with the raw amino-acid sequence, 332 residues long: Small ribosomal subunit protein uS2 (332 aa).

Belongs to the universal ribosomal protein uS2 family.

This Nitrobacter winogradskyi (strain ATCC 25391 / DSM 10237 / CIP 104748 / NCIMB 11846 / Nb-255) protein is Small ribosomal subunit protein uS2.